The sequence spans 827 residues: Cell surface glycoprotein (827 aa).

A signal peptide spans 1–34; the sequence is MTKLKDQTRAILLATLMVTSVFAGAIAFTGSAAA. Residue Asn-47 is glycosylated (N-linked (Glc...) asparagine). Residues 73-102 are compositionally biased toward polar residues; it reads PLLTGTAGNSEGVSLDLSSPIPQTTENQPL. Positions 73-111 are disordered; that stretch reads PLLTGTAGNSEGVSLDLSSPIPQTTENQPLGTYDVDGSG. Residues Asn-117, Asn-308, Asn-313, Asn-532, and Asn-766 are each glycosylated (N-linked (Glc...) asparagine). The disordered stretch occupies residues 755 to 804; the sequence is SEREDTTTSSDNATDTTTTTDGPTETTTTAEPTETTEEPTEETTTSSNTP. Over residues 761 to 787 the composition is skewed to low complexity; it reads TTSSDNATDTTTTTDGPTETTTTAEPT. The short motif at 804-806 is the PGF sorting signal element; that stretch reads PGF. Residues 804 to 823 traverse the membrane as a helical segment; the sequence is PGFGIAVALVALVGAALLAL.

Belongs to the halobacterial S-layer protein family. In terms of processing, O-glycosylated on 4 to 6 threonine residues; glycans consist of Glc-Gal disaccharides. The N-terminus is not blocked. Post-translationally, cleaved by the archaeosortase ArtA at the C-terminus, with removal of a short hydrophobic segment. In terms of processing, lipidation: Following protein translocation across the membrane, the protein is modified by a derivative of mevalonic acid. Lipid modification is ArtA-dependent and requires the conserved C-terminal PGF motif. Asn-47 and Asn-117 are glycosylated by a pentasaccharide comprising a hexose, 2 hexuronic acids, a methyl ester of a hexuronic acid and mannose. The pentasaccharide is produced in 2 steps: first, a tetrasaccharide is built on dolichol-P and then transferred to the S-layer glycoprotein. Then, the mannose fifth sugar is attached to a distinct molecule of dolichol-P and is transferred to the protein already carrying the tetrasaccharide. The pentasaccharide on Asn-47 was initially thought to contain mannose, galactose, glucose and idose with a relative ratio of 1/3/3/0.2. However, it was later shown that it is not the case. Under low-salt conditions (1.75 M instead of 3.4 M), a tetrasaccharide consisting of a sulfated hexose, 2 hexoses and rhamnose is attached to Asn-532.

The protein resides in the secreted. It is found in the cell wall. It localises to the S-layer. The protein localises to the cell membrane. In terms of biological role, S-layer protein. The S-layer is a paracrystalline mono-layered assembly of proteins which coat the surface of the cell. The chain is Cell surface glycoprotein (csg) from Haloferax volcanii (strain ATCC 29605 / DSM 3757 / JCM 8879 / NBRC 14742 / NCIMB 2012 / VKM B-1768 / DS2) (Halobacterium volcanii).